We begin with the raw amino-acid sequence, 914 residues long: DNA mismatch repair protein MutS (914 aa).

The disordered stretch occupies residues 1–25 (MDKKNDHKNNLIPQPASSFASSQER). Positions 11 to 25 (LIPQPASSFASSQER) are enriched in polar residues. 662–669 (GPNMGGKS) is an ATP binding site.

This sequence belongs to the DNA mismatch repair MutS family.

This protein is involved in the repair of mismatches in DNA. It is possible that it carries out the mismatch recognition step. This protein has a weak ATPase activity. This chain is DNA mismatch repair protein MutS, found in Bartonella tribocorum (strain CIP 105476 / IBS 506).